The chain runs to 654 residues: Potassium voltage-gated channel subfamily A member 4 (654 aa).

Topologically, residues 1 to 305 (MEVAMVSAES…LLFEYPESSS (305 aa)) are cytoplasmic. The disordered stretch occupies residues 24–145 (QARARERERL…EEGRFYYSEE (122 aa)). Over residues 36 to 50 (SRAAAAAAVAAATAA) the composition is skewed to low complexity. Residues 81–99 (GSRRRRRQRTEKKKLHHRQ) are compositionally biased toward basic residues. Phosphoserine is present on S122. The segment covering 122–137 (SEEEEDEEEEEEEEEE) has biased composition (acidic residues). The chain crosses the membrane as a helical span at residues 306 to 327 (PARGIAIVSVLVILISIVIFCL). At 328–371 (ETLPEFRDDRDLIMALSAGGHSRLLNDTSAPHLENSGHTIFNDP) the chain is on the extracellular side. Residue N353 is glycosylated (N-linked (GlcNAc...) asparagine). The chain crosses the membrane as a helical span at residues 372 to 393 (FFIVETVCIVWFSFEFVVRCFA). At 394-404 (CPSQALFFKNI) the chain is on the cytoplasmic side. A helical membrane pass occupies residues 405-425 (MNIIDIVSILPYFITLGTDLA). At 426–440 (QQQGGGNGQQQQAMS) the chain is on the extracellular side. Residues 441-461 (FAILRIIRLVRVFRIFKLSRH) traverse the membrane as a helical; Voltage-sensor segment. Over 462 to 476 (SKGLQILGHTLRASM) the chain is Cytoplasmic. Positions 463–476 (KGLQILGHTLRASM) are S4-S5 linker. The chain crosses the membrane as a helical span at residues 477 to 498 (RELGLLIFFLFIGVILFSSAVY). Residues 499–512 (FAEADEPTTHFQSI) lie on the Extracellular side of the membrane. The helical intramembrane region spans 513–524 (PDAFWWAVVTMT). A Selectivity filter motif is present at residues 525 to 530 (TVGYGD). The stretch at 525–532 (TVGYGDMK) is an intramembrane region. At 533-539 (PITVGGK) the chain is on the extracellular side. A helical transmembrane segment spans residues 540–568 (IVGSLCAIAGVLTIALPVPVIVSNFNYFY). Residues 569–654 (HRETENEEQT…SNAKAVETDV (86 aa)) are Cytoplasmic-facing. S600 carries the phosphoserine; by PKA modification. Basic and acidic residues predominate over residues 630-641 (CQGKGDESETDK). Residues 630–654 (CQGKGDESETDKNNCSNAKAVETDV) are disordered. A PDZ-binding motif is present at residues 652-654 (TDV).

This sequence belongs to the potassium channel family. A (Shaker) (TC 1.A.1.2) subfamily. Kv1.4/KCNA4 sub-subfamily. Homotetramer and heterotetramer of potassium channel proteins. Interacts with KCNAB1 and KCNAB2. Interacts with DLG1, DLG2 and DLG4 via their PDZ domains. Interacts with SIGMAR1. Detected in a complex with KCNA1. Interacts with KCNA2. Part of a complex containing KCNA1, KCNAB1 and LGI1. Interacts (via cytoplasmic N-terminal domain) with KCNRG. Expressed in the brain, lens and retina.

It is found in the cell membrane. The protein localises to the cell projection. Its subcellular location is the axon. It carries out the reaction K(+)(in) = K(+)(out). Functionally, voltage-gated potassium channel that mediates transmembrane potassium transport in excitable membranes. Forms tetrameric potassium-selective channels through which potassium ions pass in accordance with their electrochemical gradient. The channel alternates between opened and closed conformations in response to the voltage difference across the membrane. Can form functional homotetrameric channels and heterotetrameric channels that contain variable proportions of KCNA1, KCNA2, KCNA4, KCNA5, and possibly other family members as well; channel properties depend on the type of alpha subunits that are part of the channel. Channel properties are modulated by cytoplasmic beta subunits that regulate the subcellular location of the alpha subunits and promote rapid inactivation. In vivo, membranes probably contain a mixture of heteromeric potassium channel complexes, making it difficult to assign currents observed in intact tissues to any particular potassium channel family member. Homotetrameric KCNA4 forms a potassium channel that opens in response to membrane depolarization, followed by rapid spontaneous channel closure. Likewise, a heterotetrameric channel formed by KCNA1 and KCNA4 shows rapid inactivation. The protein is Potassium voltage-gated channel subfamily A member 4 (Kcna4) of Mus musculus (Mouse).